The sequence spans 213 residues: Ribonuclease Oy (213 aa).

The active site involves histidine 35. Cysteine 51 and cysteine 96 are joined by a disulfide. The N-linked (GlcNAc...) asparagine glycan is linked to asparagine 52. Residues glutamate 89 and histidine 93 contribute to the active site. N-linked (GlcNAc...) asparagine glycans are attached at residues asparagine 121 and asparagine 142. Disulfide bonds link cysteine 160–cysteine 198 and cysteine 178–cysteine 188.

Belongs to the RNase T2 family.

The protein localises to the secreted. Releases mononucleotides from RNA in the order of 3'-GMP, 3'-AMP and 3'-UMP. The chain is Ribonuclease Oy from Magallana gigas (Pacific oyster).